Reading from the N-terminus, the 269-residue chain is Hydroxyethylthiazole kinase (269 aa).

M41 is a binding site for substrate. R117 and S165 together coordinate ATP. G192 provides a ligand contact to substrate.

The protein belongs to the Thz kinase family. Mg(2+) is required as a cofactor.

It carries out the reaction 5-(2-hydroxyethyl)-4-methylthiazole + ATP = 4-methyl-5-(2-phosphooxyethyl)-thiazole + ADP + H(+). It functions in the pathway cofactor biosynthesis; thiamine diphosphate biosynthesis; 4-methyl-5-(2-phosphoethyl)-thiazole from 5-(2-hydroxyethyl)-4-methylthiazole: step 1/1. Catalyzes the phosphorylation of the hydroxyl group of 4-methyl-5-beta-hydroxyethylthiazole (THZ). The chain is Hydroxyethylthiazole kinase from Actinobacillus succinogenes (strain ATCC 55618 / DSM 22257 / CCUG 43843 / 130Z).